The sequence spans 234 residues: Peroxiredoxin-2E, chloroplastic (234 aa).

The N-terminal 70 residues, 1–70, are a transit peptide targeting the chloroplast; it reads MATSLSVSRF…TRSFATTPVT (70 aa). One can recognise a Thioredoxin domain in the interval 73–234; the sequence is ISVGDKLPDS…SSAEDMLKAL (162 aa). The residue at position 82 (Ser-82) is a Phosphoserine. The Cysteine sulfenic acid (-SOH) intermediate role is filled by Cys-121.

This sequence belongs to the peroxiredoxin family. Prx5 subfamily. In terms of assembly, monomer. In terms of tissue distribution, expressed in all tissues but predominantly in buds, siliques and seeds.

The protein localises to the plastid. Its subcellular location is the chloroplast stroma. It carries out the reaction [glutaredoxin]-dithiol + a hydroperoxide = [glutaredoxin]-disulfide + an alcohol + H2O. Its function is as follows. Thiol-specific peroxidase that catalyzes the reduction of hydrogen peroxide and organic hydroperoxides to water and alcohols, respectively. Plays a role in cell protection against oxidative stress by detoxifying peroxides. May be involved in chloroplast redox homeostasis. The sequence is that of Peroxiredoxin-2E, chloroplastic (PRXIIE) from Arabidopsis thaliana (Mouse-ear cress).